A 311-amino-acid chain; its full sequence is Pyrimidine-specific ribonucleoside hydrolase RihA (311 aa).

Residue histidine 240 is part of the active site.

The protein belongs to the IUNH family. RihA subfamily.

Its function is as follows. Hydrolyzes with equal efficiency cytidine or uridine to ribose and cytosine or uracil, respectively. This chain is Pyrimidine-specific ribonucleoside hydrolase RihA, found in Escherichia coli O8 (strain IAI1).